The primary structure comprises 774 residues: Chondroitin sulfate synthase 2 (774 aa).

Over 1–15 (MRASLLLSVLRPAGP) the chain is Cytoplasmic. The helical; Signal-anchor for type II membrane protein transmembrane segment at 16-34 (VAVGISLGFTLSLLSVTWV) threads the bilayer. Residues 35 to 774 (EEPCGPGPPQ…LFEQEQGNST (740 aa)) are Lumenal-facing. Positions 37-103 (PCGPGPPQPG…AQPGQATKKA (67 aa)) are disordered. A compositionally biased stretch (polar residues) spans 54–67 (GNTNAARRPNSVQP). N-linked (GlcNAc...) asparagine glycans are attached at residues Asn138 and Asn361. A divalent metal cation is bound at residue Asp616.

The protein belongs to the chondroitin N-acetylgalactosaminyltransferase family. As to quaternary structure, interacts with PRKN. Requires Mn(2+) as cofactor. Co(2+) is required as a cofactor. Isoform 1, isoform 2 and isoform 3 are expressed in brain (at protein level).

It is found in the golgi apparatus. The protein resides in the golgi stack membrane. The protein localises to the cytoplasm. It localises to the cytosol. Its subcellular location is the mitochondrion. It is found in the mitochondrion matrix. It catalyses the reaction 3-O-(beta-D-GlcA-(1-&gt;3)-beta-D-GalNAc-(1-&gt;4)-beta-D-GlcA-(1-&gt;3)-beta-D-Gal-(1-&gt;3)-beta-D-Gal-(1-&gt;4)-beta-D-Xyl)-L-seryl-[protein] + UDP-N-acetyl-alpha-D-galactosamine = 3-O-(beta-D-GalNAc-(1-&gt;4)-beta-D-GlcA-(1-&gt;3)-beta-D-GalNAc-(1-&gt;4)-beta-D-GlcA-(1-&gt;3)-beta-D-Gal-(1-&gt;3)-beta-D-Gal-(1-&gt;4)-beta-D-Xyl)-L-seryl-[protein] + UDP + H(+). The catalysed reaction is 3-O-{beta-D-GlcA-(1-&gt;3)-[beta-D-GalNAc-(1-&gt;4)-beta-D-GlcA-(1-&gt;3)](n)-beta-D-GalNAc-(1-&gt;4)-beta-D-GlcA-(1-&gt;3)-beta-D-Gal-(1-&gt;3)-beta-D-Gal-(1-&gt;4)-beta-D-Xyl}-L-seryl-[protein] + UDP-N-acetyl-alpha-D-galactosamine = 3-O-{[beta-D-GalNAc-(1-&gt;4)-beta-D-GlcA-(1-&gt;3)](n+1)-beta-D-GalNAc-(1-&gt;4)-beta-D-GlcA-(1-&gt;3)-beta-D-Gal-(1-&gt;3)-beta-D-Gal-(1-&gt;4)-beta-D-Xyl}-L-seryl-[protein] + UDP + H(+). It carries out the reaction 3-O-(beta-D-GalNAc-(1-&gt;4)-beta-D-GlcA-(1-&gt;3)-beta-D-Gal-(1-&gt;3)-beta-D-Gal-(1-&gt;4)-beta-D-Xyl)-L-seryl-[protein] + UDP-alpha-D-glucuronate = 3-O-(beta-D-GlcA-(1-&gt;3)-beta-D-GalNAc-(1-&gt;4)-beta-D-GlcA-(1-&gt;3)-beta-D-Gal-(1-&gt;3)-beta-D-Gal-(1-&gt;4)-beta-D-Xyl)-L-seryl-[protein] + UDP + H(+). The enzyme catalyses 3-O-{[beta-D-GalNAc-(1-&gt;4)-beta-D-GlcA-(1-&gt;3)](n)-beta-D-GalNAc-(1-&gt;4)-beta-D-GlcA-(1-&gt;3)-beta-D-Gal-(1-&gt;3)-beta-D-Gal-(1-&gt;4)-beta-D-Xyl}-L-seryl-[protein] + UDP-alpha-D-glucuronate = 3-O-{beta-D-GlcA-(1-&gt;3)-[beta-D-GalNAc-(1-&gt;4)-beta-D-GlcA-(1-&gt;3)](n)-beta-D-GalNAc-(1-&gt;4)-beta-D-GlcA-(1-&gt;3)-beta-D-Gal-(1-&gt;3)-beta-D-Gal-(1-&gt;4)-beta-D-Xyl}-L-seryl-[protein] + UDP + H(+). Its function is as follows. Has both beta-1,3-glucuronic acid and beta-1,4-N-acetylgalactosamine transferase activity. Transfers glucuronic acid (GlcUA) from UDP-GlcUA and N-acetylgalactosamine (GalNAc) from UDP-GalNAc to the non-reducing end of the elongating chondroitin polymer. Seems to act as a specific activating factor for CHSY1 in chondroitin polymerization. May facilitate PRKN transport into the mitochondria. In collaboration with PRKN, may enhance cell viability and protect cells from oxidative stress. The chain is Chondroitin sulfate synthase 2 from Mus musculus (Mouse).